The primary structure comprises 501 residues: Putative lon protease homolog (501 aa).

53–60 (GPPGIGKS) contributes to the ATP binding site. Residues 481 to 494 (SSSQRMSQHGYSSE) are compositionally biased toward polar residues. Positions 481–501 (SSSQRMSQHGYSSENIDRSYM) are disordered.

Belongs to the peptidase S16 family.

The protein is Putative lon protease homolog of Methanothermobacter thermautotrophicus (strain ATCC 29096 / DSM 1053 / JCM 10044 / NBRC 100330 / Delta H) (Methanobacterium thermoautotrophicum).